A 212-amino-acid polypeptide reads, in one-letter code: MADNDIEEAVARALEDAPQRNFRETVDLAVNLRDLDLNDPSQRVDEGVVLPSGTGQETQIVVFADGETAVRADDVADDVLDEDDLSDLADDTDAAKDLADETDFFVAEAPMMQDIAGALGQVLGPRGKMPTPLQPDDDVVDTVNRMKNTVQIRSRDRRTFHTRVGAEDMSAEDIASNIDVIMRRLHANLEKGPLNVDSVYVKTTMGPAVEVA.

The protein belongs to the universal ribosomal protein uL1 family. Part of the 50S ribosomal subunit.

Functionally, binds directly to 23S rRNA. Probably involved in E site tRNA release. Protein L1 is also a translational repressor protein, it controls the translation of its operon by binding to its mRNA. The polypeptide is Large ribosomal subunit protein uL1 (Halobacterium salinarum (strain ATCC 29341 / DSM 671 / R1)).